Here is a 92-residue protein sequence, read N- to C-terminus: Evasin P942 (92 aa).

The first 26 residues, 1–26 (MEVKTFAFLQIAVLIALGLHLAPAGS), serve as a signal peptide directing secretion. Disulfide bonds link C44–C63, C48–C65, and C59–C76. A glycan (N-linked (GlcNAc...) asparagine) is linked at N47. N70 is a glycosylation site (N-linked (GlcNAc...) asparagine).

The protein resides in the secreted. Functionally, salivary chemokine-binding protein which binds to host chemokines CXCL1, CXCL2, CXCL3, CXCL4, CXCL5, CXCL6, CXCL10, CXCL11 and CXCL13. The protein is Evasin P942 of Ixodes ricinus (Common tick).